Reading from the N-terminus, the 98-residue chain is NADH-ubiquinone oxidoreductase chain 4L (98 aa).

The next 2 membrane-spanning stretches (helical) occupy residues 26-46 and 61-81; these read LVAS…MATL and IILL…LISI.

Belongs to the complex I subunit 4L family. As to quaternary structure, core subunit of respiratory chain NADH dehydrogenase (Complex I) which is composed of 45 different subunits.

The protein localises to the mitochondrion inner membrane. It catalyses the reaction a ubiquinone + NADH + 5 H(+)(in) = a ubiquinol + NAD(+) + 4 H(+)(out). Core subunit of the mitochondrial membrane respiratory chain NADH dehydrogenase (Complex I) which catalyzes electron transfer from NADH through the respiratory chain, using ubiquinone as an electron acceptor. Part of the enzyme membrane arm which is embedded in the lipid bilayer and involved in proton translocation. The protein is NADH-ubiquinone oxidoreductase chain 4L (MT-ND4L) of Macaca nigrescens (Gorontalo macaque).